Consider the following 465-residue polypeptide: Alpha-2A adrenergic receptor (465 aa).

Residues 1-48 are Extracellular-facing; the sequence is MFRQEQPLAEGSFAPMGSLQPDAGNASWNGTEAPGGGARATPYSLQVT. Asn-25 and Asn-29 each carry an N-linked (GlcNAc...) asparagine glycan. The helical transmembrane segment at 49–74 threads the bilayer; the sequence is LTLVCLAGLLMLLTVFGNVLVIIAVF. Residues 75–85 are Cytoplasmic-facing; sequence TSRALKAPQNL. Residues 86–111 form a helical membrane-spanning segment; the sequence is FLVSLASADILVATLVIPFSLANEVM. At 112–121 the chain is on the extracellular side; sequence GYWYFGKAWC. A disulfide bridge links Cys-121 with Cys-203. Residues 122–144 traverse the membrane as a helical segment; sequence EIYLALDVLFCTSSIVHLCAISL. Residues 145–166 lie on the Cytoplasmic side of the membrane; that stretch reads DRYWSITQAIEYNLKRTPRRIK. A helical transmembrane segment spans residues 167 to 187; sequence AIIITVWVISAVISFPPLISI. The Extracellular portion of the chain corresponds to 188 to 209; sequence EKKGGGGGPQPAEPRCEINDQK. A helical transmembrane segment spans residues 210–232; the sequence is WYVISSCIGSFFAPCLIMILVYV. Topologically, residues 233–389 are cytoplasmic; sequence RIYQIAKRRT…RQNREKRFTF (157 aa). Residues 242–368 are disordered; sequence TRVPPSRRGP…TPAAGPGEER (127 aa). The segment covering 313-330 has biased composition (basic and acidic residues); sequence SSDHAERPPGPRRPERGP. Ser-346 carries the post-translational modification Phosphoserine. Omega-N-methylarginine is present on Arg-368. Residues 390 to 410 traverse the membrane as a helical segment; the sequence is VLAVVIGVFVVCWFPFFFTYT. Residues 411–424 are Extracellular-facing; it reads LTAVGCSVPRTLFK. Residues 425 to 444 traverse the membrane as a helical segment; the sequence is FFFWFGYCNSSLNPVIYTIF. At 445-465 the chain is on the cytoplasmic side; it reads NHDFRRAFKKILCRGDRKRIV. Cys-457 is lipidated: S-palmitoyl cysteine.

This sequence belongs to the G-protein coupled receptor 1 family. Adrenergic receptor subfamily. ADRA2A sub-subfamily.

The protein resides in the cell membrane. Alpha-2 adrenergic receptors mediate the catecholamine-induced inhibition of adenylate cyclase through the action of G proteins. The rank order of potency for agonists of this receptor is oxymetazoline &gt; clonidine &gt; epinephrine &gt; norepinephrine &gt; phenylephrine &gt; dopamine &gt; p-synephrine &gt; p-tyramine &gt; serotonin = p-octopamine. For antagonists, the rank order is yohimbine &gt; phentolamine = mianserine &gt; chlorpromazine = spiperone = prazosin &gt; propanolol &gt; alprenolol = pindolol. This Homo sapiens (Human) protein is Alpha-2A adrenergic receptor.